The sequence spans 525 residues: Plant UBX domain-containing protein 13 (525 aa).

Residues 2–44 (ATPTQEAIDTFMTITGSSNAVAVRKLEEYRGNLNRAVNAYFTH) enclose the UBA-like domain. 3 disordered regions span residues 67 to 96 (RTTD…PPFV), 150 to 172 (DDDN…SAEN), and 194 to 328 (METG…EEHD). Residues 209 to 229 (AEREVLRSEGWKASSSEREAS) show a composition bias toward basic and acidic residues. Positions 254–274 (SEDDDDDDDDDPDYVEEEEEP) are enriched in acidic residues. S362 is subject to Phosphoserine. Residues 380–436 (LASLEADRVKAEARRLEEEAARVEAIEEAKRKEEEARRKVEEEQELERQLVSKEASL) are a coiled coil. The segment covering 408–430 (AKRKEEEARRKVEEEQELERQLV) has biased composition (basic and acidic residues). The segment at 408–446 (AKRKEEEARRKVEEEQELERQLVSKEASLPQEPPAGEEN) is disordered. The UBX domain occupies 443–521 (GEENAITLQV…GLTSKQEALF (79 aa)).

This Arabidopsis thaliana (Mouse-ear cress) protein is Plant UBX domain-containing protein 13.